The sequence spans 235 residues: Small ribosomal subunit protein uS3 (235 aa).

The 69-residue stretch at 39 to 107 (IREFIKEECK…ELHLNIVEVR (69 aa)) folds into the KH type-2 domain. Residues 213–235 (QARDRKAQELQDGPAPRGAGGRR) are disordered.

It belongs to the universal ribosomal protein uS3 family. As to quaternary structure, part of the 30S ribosomal subunit. Forms a tight complex with proteins S10 and S14.

In terms of biological role, binds the lower part of the 30S subunit head. Binds mRNA in the 70S ribosome, positioning it for translation. The sequence is that of Small ribosomal subunit protein uS3 from Ruegeria pomeroyi (strain ATCC 700808 / DSM 15171 / DSS-3) (Silicibacter pomeroyi).